The following is a 353-amino-acid chain: MTLQRISKDYLKPNYGLILLIVSYFFNSSMVVSTKVLENDPLETSQSRINPLQILLVRMSITYCCTLVYMHWNKQSVPDIPWGPAPCRKWLILRGIMGFFGVFGMYFSLMYLSISDAVLITFMSPTLTIFLSFLLLGEPFSKLEALGSLISFSGVVLIIRPTFLFGEQTQGQQSPQDDIVETQNPKLRLIAIGVSLLGVCGLSSVYIIIRYIGNKAHAIMSVSYFSLVTTVVAALGVLLIPSMSLQLPHSWKQWGLFLNLGISGFIHQILLTMGIQRERAGRGSLMTYTQVIYAVFWDVVLFHHWPNIWTWCGMAVIVSSTIWVINMRASKQNVVATAELLSTSDFELDDLED.

Residues 1-16 lie on the Cytoplasmic side of the membrane; it reads MTLQRISKDYLKPNYG. A helical membrane pass occupies residues 17–37; that stretch reads LILLIVSYFFNSSMVVSTKVL. In terms of domain architecture, EamA 1 spans 24-160; the sequence is YFFNSSMVVS…SFSGVVLIIR (137 aa). At 38-51 the chain is on the extracellular side; it reads ENDPLETSQSRINP. A helical transmembrane segment spans residues 52–69; it reads LQILLVRMSITYCCTLVY. Residues 70-94 are Cytoplasmic-facing; sequence MHWNKQSVPDIPWGPAPCRKWLILR. The helical transmembrane segment at 95 to 115 threads the bilayer; the sequence is GIMGFFGVFGMYFSLMYLSIS. Residue Asp116 is a topological domain, extracellular. The chain crosses the membrane as a helical span at residues 117-137; that stretch reads AVLITFMSPTLTIFLSFLLLG. At 138 to 144 the chain is on the cytoplasmic side; the sequence is EPFSKLE. The chain crosses the membrane as a helical span at residues 145–165; that stretch reads ALGSLISFSGVVLIIRPTFLF. At 166 to 188 the chain is on the extracellular side; it reads GEQTQGQQSPQDDIVETQNPKLR. The chain crosses the membrane as a helical span at residues 189 to 209; that stretch reads LIAIGVSLLGVCGLSSVYIII. The 127-residue stretch at 200-326 folds into the EamA 2 domain; it reads CGLSSVYIII…IVSSTIWVIN (127 aa). Over 210–218 the chain is Cytoplasmic; it reads RYIGNKAHA. A helical transmembrane segment spans residues 219-239; that stretch reads IMSVSYFSLVTTVVAALGVLL. Topologically, residues 240 to 254 are extracellular; the sequence is IPSMSLQLPHSWKQW. Residues 255–275 form a helical membrane-spanning segment; it reads GLFLNLGISGFIHQILLTMGI. The Cytoplasmic segment spans residues 276-282; that stretch reads QRERAGR. The helical transmembrane segment at 283–303 threads the bilayer; sequence GSLMTYTQVIYAVFWDVVLFH. His304 is a topological domain (extracellular). The chain crosses the membrane as a helical span at residues 305-325; the sequence is WPNIWTWCGMAVIVSSTIWVI. Residues 326–353 lie on the Cytoplasmic side of the membrane; the sequence is NMRASKQNVVATAELLSTSDFELDDLED.

Its subcellular location is the membrane. The protein is Probable transport protein YPL264C of Saccharomyces cerevisiae (strain ATCC 204508 / S288c) (Baker's yeast).